The following is a 325-amino-acid chain: Intelectin-2 (325 aa).

The first 26 residues, 1–26, serve as a signal peptide directing secretion; it reads MLSMLRTMTRLCFLLFFSVATSGCSA. In terms of domain architecture, Fibrinogen C-terminal spans 44–267; that stretch reads FSFSSLPRSC…AANALCAGIK (224 aa). An intrachain disulfide couples Cys-53 to Cys-82. The Ca(2+) site is built by His-98, Glu-99, Asp-101, Gly-104, Gly-109, Asp-110, and Asp-145. 3 cysteine pairs are disulfide-bonded: Cys-106-Cys-292, Cys-211-Cys-271, and Cys-263-Cys-277. Residues Asn-272, Glu-274, and Asp-294 each coordinate Ca(2+). 274–275 serves as a coordination point for a carbohydrate; that stretch reads EH.

As to expression, expressed only in the small intestine.

The protein resides in the secreted. Its function is as follows. May play a role in the defense system against pathogens. This Homo sapiens (Human) protein is Intelectin-2 (ITLN2).